The following is a 307-amino-acid chain: Heme A synthase (307 aa).

Over 1–6 the chain is Cytoplasmic; it reads MKFALR. Residues 7–27 form a helical membrane-spanning segment; that stretch reads LLSVITTFVMLIVLIGGALVT. Over 28-65 the chain is Extracellular; the sequence is KTGSGLGCGRQWPLCHGRFFPEMNPASIIEWSHRMSTG. A disulfide bridge connects residues Cys-35 and Cys-42. Glu-57 is an active-site residue. His-60 provides a ligand contact to heme o. A helical membrane pass occupies residues 66–86; that stretch reads VSTILVLALAVLCWKKISPVF. Topologically, residues 87 to 92 are cytoplasmic; sequence RETKFL. A helical transmembrane segment spans residues 93-113; that stretch reads VIMSIIFLLLQALLGALAVVF. The Extracellular segment spans residues 114–121; it reads GSNALVMA. The helical transmembrane segment at 122–142 threads the bilayer; it reads LHFGISLISFASVLLLALLVF. Residue His-123 coordinates heme o. Residues 143-161 lie on the Cytoplasmic side of the membrane; that stretch reads EATRSETKLVKPLHIGKKM. The chain crosses the membrane as a helical span at residues 162–182; the sequence is QFHIYGLITYTYIVVYTGAYV. Topologically, residues 183 to 216 are extracellular; the sequence is RHTKSSLACSVFPFCSKDGALPAYFNQWVQMSHR. A disulfide bridge connects residues Cys-191 and Cys-197. His-215 serves as a coordination point for heme b. The helical transmembrane segment at 217–237 threads the bilayer; it reads AAALLLFVWIFVAMFHAMKHY. Over 238–242 the chain is Cytoplasmic; that stretch reads KEQKQ. The chain crosses the membrane as a helical span at residues 243–263; sequence LYYGWIISAILITLQAISGVM. Residues 264–274 are Extracellular-facing; that stretch reads SVYSQLALGYA. The chain crosses the membrane as a helical span at residues 275–295; sequence LAHSFFISCLFGVLCYFCLLI. His-277 is a binding site for heme b. The Cytoplasmic portion of the chain corresponds to 296–307; sequence ARFKYESKEPFK.

This sequence belongs to the COX15/CtaA family. Type 1 subfamily. As to quaternary structure, interacts with CtaB. Heme b is required as a cofactor.

It localises to the cell membrane. The catalysed reaction is Fe(II)-heme o + 2 A + H2O = Fe(II)-heme a + 2 AH2. It functions in the pathway porphyrin-containing compound metabolism; heme A biosynthesis; heme A from heme O: step 1/1. Its function is as follows. Catalyzes the conversion of heme O to heme A by two successive hydroxylations of the methyl group at C8. The first hydroxylation forms heme I, the second hydroxylation results in an unstable dihydroxymethyl group, which spontaneously dehydrates, resulting in the formyl group of heme A. This chain is Heme A synthase, found in Bacillus pumilus (strain SAFR-032).